Here is a 257-residue protein sequence, read N- to C-terminus: Probable oxidoreductase yanE (257 aa).

The protein belongs to the oxidoreductase OpS7 family.

It participates in secondary metabolite biosynthesis; terpenoid biosynthesis. Functionally, part of the gene cluster that mediates the biosynthesis of yanuthone D, a fungal isoprenoid epoxycyclohexenone that acts as an antibiotic against fungi and bacteria. The first step of the pathway is the synthesis of 6-methylsalicylic acid (6-MSA) by the polyketide synthase yanA. 6-MSA is then converted to m-cresol by the decarboxylase yanB. The cytochrome P450 monooxygenase yanC then catalyzes the oxidation of m-cresol to toluquinol. Epoxidation of toluquinol is then performed by the short chain dehydrogenase yanD, with the help of yanE, and a further prenylation by yanG leads to 7-deacetoxyyanuthone A. The next step is the hydroxylation of C-22 of 7-deacetoxyyanuthone A by the cytochrome P450 monooxygenase yanH to yield 22-deacetylyanuthone A. O-Mevalon transferase yanI then attaches mevalon to the hydroxyl group of 22-deacetylyanuthone A to produce yanuthone E. Finally, the FAD-dependent monooxygenase yanF oxidizes the hydroxyl group at C15 of yanuthone E to form yanuthone D. Furthermore, several branching points in the pathway lead to the production of yanuthones F and G from 7-deacetoxyyanuthone A; yanuthones H and I from 22-deacetylyanuthone A; and yanuthone J from yanuthone E. YanE is also involved in the synthesis of yanuthone X1 which does not have 6-methylsalicylic acid (6-MSA) as precursor. This Aspergillus niger (strain ATCC 1015 / CBS 113.46 / FGSC A1144 / LSHB Ac4 / NCTC 3858a / NRRL 328 / USDA 3528.7) protein is Probable oxidoreductase yanE.